The sequence spans 184 residues: Peptide deformylase (184 aa).

Residues cysteine 111 and histidine 154 each contribute to the Fe cation site. Glutamate 155 is an active-site residue. Residue histidine 158 coordinates Fe cation.

It belongs to the polypeptide deformylase family. The cofactor is Fe(2+).

It carries out the reaction N-terminal N-formyl-L-methionyl-[peptide] + H2O = N-terminal L-methionyl-[peptide] + formate. Functionally, removes the formyl group from the N-terminal Met of newly synthesized proteins. Requires at least a dipeptide for an efficient rate of reaction. N-terminal L-methionine is a prerequisite for activity but the enzyme has broad specificity at other positions. The chain is Peptide deformylase from Lacticaseibacillus casei (strain BL23) (Lactobacillus casei).